A 106-amino-acid polypeptide reads, in one-letter code: uncharacterized protein (106 aa).

This is an uncharacterized protein from Methanocaldococcus jannaschii (strain ATCC 43067 / DSM 2661 / JAL-1 / JCM 10045 / NBRC 100440) (Methanococcus jannaschii).